The following is a 378-amino-acid chain: D-alanine--D-alanine ligase (378 aa).

One can recognise an ATP-grasp domain in the interval 157–368; it reads KVVFESAGLS…YGDLIDELIH (212 aa). 189 to 244 provides a ligand contact to ATP; it reads VDKLGFPVFVKPARAGSSMGISKVDSMEGLDAAIDEARRHDLKLVIEAGIVGREIE. Residues D322, E335, and N337 each coordinate Mg(2+).

This sequence belongs to the D-alanine--D-alanine ligase family. Mg(2+) serves as cofactor. It depends on Mn(2+) as a cofactor.

The protein localises to the cytoplasm. The enzyme catalyses 2 D-alanine + ATP = D-alanyl-D-alanine + ADP + phosphate + H(+). It participates in cell wall biogenesis; peptidoglycan biosynthesis. Functionally, cell wall formation. This is D-alanine--D-alanine ligase from Paenarthrobacter aurescens (strain TC1).